Here is a 266-residue protein sequence, read N- to C-terminus: Hydroxypyruvate/pyruvate aldolase (266 aa).

Histidine 48 acts as the Proton acceptor in catalysis. The a divalent metal cation site is built by glutamate 152 and aspartate 178.

It belongs to the HpcH/HpaI aldolase family. The cofactor is a divalent metal cation.

It catalyses the reaction D-glyceraldehyde + pyruvate = 2-dehydro-3-deoxy-L-galactonate. It carries out the reaction 2-dehydro-3-deoxy-D-gluconate = D-glyceraldehyde + pyruvate. Functionally, aldolase which can catalyze in vitro the aldolisation reaction between hydroxypyruvate (HPA) or pyruvate (PA) and D-glyceraldehyde (D-GA). The condensation of pyruvate and D-glyceraldehyde produces 2-dehydro-3-deoxy-L-galactonate as the major product and 2-dehydro-3-deoxy-D-gluconate. Has weak activity with hydroxypyruvate and D-glyceraldehyde. The polypeptide is Hydroxypyruvate/pyruvate aldolase (Agrobacterium fabrum (strain C58 / ATCC 33970) (Agrobacterium tumefaciens (strain C58))).